An 830-amino-acid polypeptide reads, in one-letter code: Protein translocase subunit SecA (830 aa).

Residues Q86, 104–108, and D491 contribute to the ATP site; that span reads GEGKT. The Zn(2+) site is built by C813, C815, C824, and C825.

This sequence belongs to the SecA family. Monomer and homodimer. Part of the essential Sec protein translocation apparatus which comprises SecA, SecYEG and auxiliary proteins SecDF. Other proteins may also be involved. Requires Zn(2+) as cofactor.

It localises to the cell membrane. Its subcellular location is the cytoplasm. The enzyme catalyses ATP + H2O + cellular proteinSide 1 = ADP + phosphate + cellular proteinSide 2.. Its function is as follows. Part of the Sec protein translocase complex. Interacts with the SecYEG preprotein conducting channel. Has a central role in coupling the hydrolysis of ATP to the transfer of proteins into and across the cell membrane, serving as an ATP-driven molecular motor driving the stepwise translocation of polypeptide chains across the membrane. The sequence is that of Protein translocase subunit SecA from Syntrophomonas wolfei subsp. wolfei (strain DSM 2245B / Goettingen).